Consider the following 171-residue polypeptide: Large ribosomal subunit protein uL10 (171 aa).

Belongs to the universal ribosomal protein uL10 family. As to quaternary structure, part of the ribosomal stalk of the 50S ribosomal subunit. The N-terminus interacts with L11 and the large rRNA to form the base of the stalk. The C-terminus forms an elongated spine to which L12 dimers bind in a sequential fashion forming a multimeric L10(L12)X complex.

In terms of biological role, forms part of the ribosomal stalk, playing a central role in the interaction of the ribosome with GTP-bound translation factors. The chain is Large ribosomal subunit protein uL10 from Corynebacterium glutamicum (strain ATCC 13032 / DSM 20300 / JCM 1318 / BCRC 11384 / CCUG 27702 / LMG 3730 / NBRC 12168 / NCIMB 10025 / NRRL B-2784 / 534).